The sequence spans 98 residues: NADH-ubiquinone oxidoreductase chain 4L (98 aa).

3 helical membrane-spanning segments follow: residues 1 to 21 (MTPVHFSFSSAFILGLMGLAF), 29 to 49 (ALLCLEGMMLSLFIALALWAL), and 59 to 79 (APMLLLAFSACEASTGLALLV).

The protein belongs to the complex I subunit 4L family.

The protein resides in the mitochondrion membrane. It catalyses the reaction a ubiquinone + NADH + 5 H(+)(in) = a ubiquinol + NAD(+) + 4 H(+)(out). Its function is as follows. Core subunit of the mitochondrial membrane respiratory chain NADH dehydrogenase (Complex I) which catalyzes electron transfer from NADH through the respiratory chain, using ubiquinone as an electron acceptor. Part of the enzyme membrane arm which is embedded in the lipid bilayer and involved in proton translocation. This is NADH-ubiquinone oxidoreductase chain 4L (MT-ND4L) from Carassius auratus (Goldfish).